We begin with the raw amino-acid sequence, 848 residues long: Adenylate cyclase (848 aa).

The interval 1–535 is catalytic; that stretch reads MYLYIETLKQ…DVSHHFPLRL (535 aa). The tract at residues 541 to 848 is regulatory; that stretch reads KALYSPCEIR…DAPLLQQYFS (308 aa). At H609 the chain carries Phosphohistidine; by CRR.

Belongs to the adenylyl cyclase class-1 family.

Its subcellular location is the cytoplasm. The catalysed reaction is ATP = 3',5'-cyclic AMP + diphosphate. The sequence is that of Adenylate cyclase (cyaA) from Salmonella typhi.